Consider the following 283-residue polypeptide: MKTPFSKMDGLGNQIIVADMRESTQALTPQAILALSADPEMHFDQIMAIRNPTKNEADFHIEIWNADGSKAKACGNGTRCVIAWLTDHNFGENFRLEAPTGIIEGKRQADNLISVDMGCPNFNAKEMPVSREIVDTNHIDITAGPLKDACLISIGNLHAIFFVENDVQHIPLEKYGPKLEHDPLFPERCNISIACITSKKSLNLRTWERGAGLTQACGSAACAGAVAAYRRSLTQRHIDVNLPGGKLNIFYREDDHIIMTGPIKYQFSGFLNPLTGCYKKDNS.

Substrate is bound by residues asparagine 13, glutamine 45, and asparagine 65. The active-site Proton donor is cysteine 74. Substrate-binding positions include 75–76 (GN), asparagine 156, asparagine 190, and 208–209 (ER). The Proton acceptor role is filled by cysteine 217. 218–219 (GS) contacts substrate.

Belongs to the diaminopimelate epimerase family. Homodimer.

It localises to the cytoplasm. It carries out the reaction (2S,6S)-2,6-diaminopimelate = meso-2,6-diaminopimelate. Its pathway is amino-acid biosynthesis; L-lysine biosynthesis via DAP pathway; DL-2,6-diaminopimelate from LL-2,6-diaminopimelate: step 1/1. Its function is as follows. Catalyzes the stereoinversion of LL-2,6-diaminopimelate (L,L-DAP) to meso-diaminopimelate (meso-DAP), a precursor of L-lysine and an essential component of the bacterial peptidoglycan. The polypeptide is Diaminopimelate epimerase (Bartonella tribocorum (strain CIP 105476 / IBS 506)).